The following is a 499-amino-acid chain: Lysine--tRNA ligase (499 aa).

The Mg(2+) site is built by glutamate 408 and glutamate 415.

Belongs to the class-II aminoacyl-tRNA synthetase family. In terms of assembly, homodimer. Mg(2+) is required as a cofactor.

The protein resides in the cytoplasm. The catalysed reaction is tRNA(Lys) + L-lysine + ATP = L-lysyl-tRNA(Lys) + AMP + diphosphate. The protein is Lysine--tRNA ligase of Thermoanaerobacter sp. (strain X514).